Consider the following 701-residue polypeptide: Protein mono-ADP-ribosyltransferase PARP12 (701 aa).

C3H1-type zinc fingers lie at residues 94 to 119, 150 to 179, and 180 to 202; these read LCRF…HSLT, WLLP…IKLH, and ICQY…HDFS. The interval 234–268 is disordered; the sequence is KNKSSAPSRVPPLFVPQGTSERKDSSGSVSPNTLS. The residue at position 258 (serine 258) is a Phosphoserine. Over residues 259–268 the composition is skewed to polar residues; sequence SGSVSPNTLS. C3H1-type zinc fingers lie at residues 270-297 and 271-296; these read EEGD…HFHL and EGDQ…VHFH. WWE domains lie at 298–361 and 364–458; these read PYRW…RLST and SVTK…KVCR. Cysteine 474 carries the post-translational modification ADP-ribosylcysteine. The PARP catalytic domain maps to 484–698; it reads IPDYWDSSAL…ILLALGSLFS (215 aa). Residues aspartate 600 and aspartate 611 each carry the ADP-ribosyl aspartic acid modification.

Belongs to the ARTD/PARP family. Interacts with PARP11; this interaction plays a key role in zika virus suppression. Interacts with ISG15. Auto-mono-ADP-ribosylated. Post-translationally, phosphorylated by PRKD1.

Its subcellular location is the nucleus. It is found in the golgi apparatus. It localises to the trans-Golgi network. The protein resides in the cytoplasm. The protein localises to the stress granule. The catalysed reaction is L-aspartyl-[protein] + NAD(+) = 4-O-(ADP-D-ribosyl)-L-aspartyl-[protein] + nicotinamide. The enzyme catalyses L-cysteinyl-[protein] + NAD(+) = S-(ADP-D-ribosyl)-L-cysteinyl-[protein] + nicotinamide + H(+). Mono-ADP-ribosyltransferase that mediates mono-ADP-ribosylation of target proteins. Acts as an antiviral factor by cooperating with PARP11 to suppress Zika virus replication. Displays anti-alphavirus activity during IFN-gamma immune activation by directly ADP-ribosylating the alphaviral non-structural proteins nsP3 and nsP4. Acts as a component of the PRKD1-driven regulatory cascade that selectively controls a major branch of the basolateral transport pathway by catalyzing the MARylation of GOLGA1. Acts also as a key regulator of mitochondrial function, protein translation, and inflammation. Inhibits PINK1/Parkin-dependent mitophagy and promotes cartilage degeneration by inhibiting the ubiquitination and SUMOylation of MFN1/2 by upregulating ISG15 and ISGylation. This chain is Protein mono-ADP-ribosyltransferase PARP12, found in Homo sapiens (Human).